The following is a 312-amino-acid chain: Cobalamin biosynthesis protein CobD (312 aa).

4 helical membrane-spanning segments follow: residues 61 to 81, 83 to 103, 152 to 172, and 292 to 312; these read IALLLAPFTLAAWALARLPLL, IIVPVALLYLAVGARSLAQHA, DAVFAALFWFLVLGAPGAVLY, and GMWLWAALSLAAAILIGAIHA.

Belongs to the CobD/CbiB family.

Its subcellular location is the cell membrane. It functions in the pathway cofactor biosynthesis; adenosylcobalamin biosynthesis. Its function is as follows. Converts cobyric acid to cobinamide by the addition of aminopropanol on the F carboxylic group. This chain is Cobalamin biosynthesis protein CobD, found in Chromobacterium violaceum (strain ATCC 12472 / DSM 30191 / JCM 1249 / CCUG 213 / NBRC 12614 / NCIMB 9131 / NCTC 9757 / MK).